The primary structure comprises 611 residues: Histone acetyltransferase KAT7 (611 aa).

The interval 1-173 (MPRRKRNAGS…SDLSHRPKRR (173 aa)) is disordered. Ser10 is modified (phosphoserine). Low complexity predominate over residues 42–57 (VTRSSARLSQSSQDSS). Ser50 and Ser53 each carry phosphoserine; by ATR. Ser57 is subject to Phosphoserine; by PLK1. The residue at position 64 (Ser64) is a Phosphoserine. 2 positions are modified to phosphothreonine; by CDK1: Thr85 and Thr88. A compositionally biased stretch (polar residues) spans 96–105 (QTRSSGSETE). Phosphoserine is present on Ser102. Thr104 is modified (phosphothreonine). Over residues 110 to 125 (FSDRETKNTADHDESP) the composition is skewed to basic and acidic residues. A phosphoserine mark is found at Ser111 and Ser124. Thr128 is subject to Phosphothreonine. Positions 134–145 (PSSESDIDISSP) are enriched in low complexity. Basic and acidic residues predominate over residues 148–168 (SHDESIAKDMSLKDSGSDLSH). Phosphoserine occurs at positions 158, 162, 164, and 178. The CCHHC-type zinc-finger motif lies at 176 to 219 (HESYNFNMKCPTPGCNSLGHLTGKHERHFSISGCPLYHNLSADE). N6-acetyllysine is present on residues Lys199 and Lys277. Residue Lys323 forms a Glycyl lysine isopeptide (Lys-Gly) (interchain with G-Cter in SUMO2) linkage. One can recognise an MYST-type HAT domain in the interval 332–607 (EGSNMIKTIA…MDPSCLKWTP (276 aa)). Residue Lys338 forms a Glycyl lysine isopeptide (Lys-Gly) (interchain with G-Cter in ubiquitin) linkage. The C2HC MYST-type zinc-finger motif lies at 365-390 (LYMCEFCLKYMKSQTILRRHMAKCVW). Residues Cys368, Cys371, His384, and Cys388 each coordinate Zn(2+). Lys432 is modified (N6-acetyllysine; by autocatalysis). Residues 475–477 (ILT) and 483–488 (RQGYGK) each bind acetyl-CoA. Residue Ser506 is modified to Phosphoserine. Glu508 acts as the Proton donor/acceptor in catalysis. Acetyl-CoA-binding residues include Ser512 and Ser521.

It belongs to the MYST (SAS/MOZ) family. As to quaternary structure, component of the HBO1 complex composed of KAT7/HBO1, MEAF6, ING4 or ING5, and one scaffold subunit: complexes containing BRPF scaffold (BRPF1, BRD1/BRPF2 or BRPF3) direct KAT7/HBO1 specificity towards H3K14ac, while complexes containing JADE scaffold (JADE1, JADE2 and JADE3) mediate acetylation of histone H4. Interacts with MCM2 and ORC1. Interacts with the androgen receptor (AR); in the presence of dihydrotestosterone. Interacts with CDT1. Interacts with MAP2K1 and CUL1. Interacts with p53/TP53; leading to inhibit histone acetyltransferase activity. Interacts with MIS18BP1. In terms of processing, phosphorylated at Ser-50 and Ser-53 by ATR in response to DNA damage, promoting its ubiquitination by the CRL4(DDB2) complex and subsequent degradation. Phosphorylation at Ser-50 and Ser-53 by ATR in response to ultraviolet-induced DNA, promotes localization to DNA damage sites. Phosphorylation at Ser-57 by PLK1 during mitosis seems important for prereplicative complex formation and DNA replication licensing, and requires prior phosphorylation at Thr-85 and Thr-88 by CDK1. Phosphorylated by MAP2K1, which accelerates its degradation. Post-translationally, ubiquitinated at Lys-338, leading to proteasomal degradation. Ubiquitinated by the CRL4(DDB2) complex following phosphorylation by ATR, leading to its subsequent degradation. Autoacetylation at Lys-432 is required for proper function. In terms of tissue distribution, ubiquitously expressed, with highest levels in testis.

It is found in the nucleus. It localises to the chromosome. Its subcellular location is the centromere. The protein localises to the cytoplasm. The protein resides in the cytosol. It carries out the reaction L-lysyl-[histone] + acetyl-CoA = N(6)-acetyl-L-lysyl-[histone] + CoA + H(+). Its activity is regulated as follows. Histone acetyltransferase activity is inhibited by GMNN in the context of a complex with CDT1, inhibiting histone H4 acetylation and DNA replication licensing. Selectively inhibited by WM-3835 (N'-(4-fluoro-5-methyl-[1,1'-biphenyl]-3-carbonyl)-3- hydroxybenzenesulfonohydrazide) inhibitor. Functionally, catalytic subunit of histone acetyltransferase HBO1 complexes, which specifically mediate acetylation of histone H3 at 'Lys-14' (H3K14ac), thereby regulating various processes, such as gene transcription, protein ubiquitination, immune regulation, stem cell pluripotent and self-renewal maintenance and embryonic development. Some complexes also catalyze acetylation of histone H4 at 'Lys-5', 'Lys-8' and 'Lys-12' (H4K5ac, H4K8ac and H4K12ac, respectively), regulating DNA replication initiation, regulating DNA replication initiation. Specificity of the HBO1 complexes is determined by the scaffold subunit: complexes containing BRPF scaffold (BRPF1, BRD1/BRPF2 or BRPF3) direct KAT7/HBO1 specificity towards H3K14ac, while complexes containing JADE (JADE1, JADE2 and JADE3) scaffold direct KAT7/HBO1 specificity towards histone H4. H3K14ac promotes transcriptional elongation by facilitating the processivity of RNA polymerase II. Acts as a key regulator of hematopoiesis by forming a complex with BRD1/BRPF2, directing KAT7/HBO1 specificity towards H3K14ac and promoting erythroid differentiation. H3K14ac is also required for T-cell development. KAT7/HBO1-mediated acetylation facilitates two consecutive steps, licensing and activation, in DNA replication initiation: H3K14ac facilitates the activation of replication origins, and histone H4 acetylation (H4K5ac, H4K8ac and H4K12ac) facilitates chromatin loading of MCM complexes, promoting DNA replication licensing. Acts as a positive regulator of centromeric CENPA assembly: recruited to centromeres and mediates histone acetylation, thereby preventing centromere inactivation mediated by SUV39H1, possibly by increasing histone turnover/exchange. Involved in nucleotide excision repair: phosphorylation by ATR in response to ultraviolet irradiation promotes its localization to DNA damage sites, where it mediates histone acetylation to facilitate recruitment of XPC at the damaged DNA sites. Acts as an inhibitor of NF-kappa-B independently of its histone acetyltransferase activity. Its function is as follows. Plays a central role in the maintenance of leukemia stem cells in acute myeloid leukemia (AML). Acts by mediating acetylation of histone H3 at 'Lys-14' (H3K14ac), thereby facilitating the processivity of RNA polymerase II to maintain the high expression of key genes, such as HOXA9 and HOXA10 that help to sustain the functional properties of leukemia stem cells. In Homo sapiens (Human), this protein is Histone acetyltransferase KAT7.